Consider the following 504-residue polypeptide: ATP synthase subunit alpha (504 aa).

170–177 (GDRQTGKT) serves as a coordination point for ATP.

The protein belongs to the ATPase alpha/beta chains family. As to quaternary structure, F-type ATPases have 2 components, CF(1) - the catalytic core - and CF(0) - the membrane proton channel. CF(1) has five subunits: alpha(3), beta(3), gamma(1), delta(1), epsilon(1). CF(0) has four main subunits: a(1), b(1), b'(1) and c(9-12).

The protein localises to the cellular thylakoid membrane. It catalyses the reaction ATP + H2O + 4 H(+)(in) = ADP + phosphate + 5 H(+)(out). Produces ATP from ADP in the presence of a proton gradient across the membrane. The alpha chain is a regulatory subunit. The chain is ATP synthase subunit alpha from Prochlorococcus marinus (strain NATL2A).